A 481-amino-acid polypeptide reads, in one-letter code: Bestrophin homolog 17 (481 aa).

At 1 to 27 the chain is on the cytoplasmic side; that stretch reads MTVSYQLDVSSGNPLLFLRLLGRWRGS. The helical transmembrane segment at 28 to 48 threads the bilayer; sequence IWKSVVGDLFVWLLFYYAIYF. At 49–95 the chain is on the extracellular side; sequence AYRYAFSKQLQTVFEEISIHTDDRMKYLPLTFMLGFFVTTVFERWRS. Residues 96-116 form a helical membrane-spanning segment; the sequence is ALNVMPFIESVALSVAVLLPG. At 117 to 230 the chain is on the cytoplasmic side; sequence KGREDRLTRR…AMETLIKFDA (114 aa). Residues 231 to 251 form a helical membrane-spanning segment; the sequence is IPIPIAYPQVVFLAVRVYFAI. The Extracellular segment spans residues 252 to 274; sequence CLVSRQFLISDMKSKTQMDWPVP. The helical transmembrane segment at 275–295 threads the bilayer; the sequence is IMTVLEFIFVIGWMKVAEVLL. Over 296 to 481 the chain is Cytoplasmic; that stretch reads NPLGEDDDDF…SSEESVDKKG (186 aa). Residues 427-481 form a disordered region; it reads AGMLNKSTQPDRPTMETVSEEHEPSHFYRGDRVHSSDSGLSKTQQSSEESVDKKG. Over residues 445–461 the composition is skewed to basic and acidic residues; the sequence is SEEHEPSHFYRGDRVHS. A compositionally biased stretch (polar residues) spans 462 to 474; sequence SDSGLSKTQQSSE.

The protein belongs to the anion channel-forming bestrophin (TC 1.A.46) family. Calcium-sensitive chloride channel subfamily. Forms oligomers.

The protein resides in the cell membrane. In terms of biological role, forms chloride channels. In Caenorhabditis elegans, this protein is Bestrophin homolog 17.